Consider the following 66-residue polypeptide: Large ribosomal subunit protein uL29 (66 aa).

This sequence belongs to the universal ribosomal protein uL29 family.

The chain is Large ribosomal subunit protein uL29 from Bartonella henselae (strain ATCC 49882 / DSM 28221 / CCUG 30454 / Houston 1) (Rochalimaea henselae).